We begin with the raw amino-acid sequence, 490 residues long: Betaine aldehyde dehydrogenase (490 aa).

Residues Ile27 and Asp93 each contribute to the K(+) site. 150–152 (GAW) provides a ligand contact to NAD(+). The Charge relay system role is filled by Lys162. 176 to 179 (KPSE) provides a ligand contact to NAD(+). A K(+)-binding site is contributed by Val180. Residue 230 to 233 (GTTT) coordinates NAD(+). Position 246 (Leu246) interacts with K(+). Glu252 acts as the Proton acceptor in catalysis. 3 residues coordinate NAD(+): Gly254, Cys286, and Glu387. Cys286 acts as the Nucleophile in catalysis. Cys286 is subject to Cysteine sulfenic acid (-SOH). 2 residues coordinate K(+): Lys457 and Gly460. Catalysis depends on Glu464, which acts as the Charge relay system.

The protein belongs to the aldehyde dehydrogenase family. Dimer of dimers. K(+) is required as a cofactor.

It carries out the reaction betaine aldehyde + NAD(+) + H2O = glycine betaine + NADH + 2 H(+). The protein operates within amine and polyamine biosynthesis; betaine biosynthesis via choline pathway; betaine from betaine aldehyde: step 1/1. Functionally, involved in the biosynthesis of the osmoprotectant glycine betaine. Catalyzes the irreversible oxidation of betaine aldehyde to the corresponding acid. The polypeptide is Betaine aldehyde dehydrogenase (Pseudomonas putida (strain W619)).